The chain runs to 473 residues: Chaperone SurA (473 aa).

Positions 1–36 (MTNDRLFAGIARVLSVRPLAAALALLLTLPLIGVQA) are cleaved as a signal peptide. PpiC domains lie at 214–315 (SLAL…KVIE) and 326–425 (ITQT…QVLE).

The protein localises to the periplasm. It catalyses the reaction [protein]-peptidylproline (omega=180) = [protein]-peptidylproline (omega=0). Its function is as follows. Chaperone involved in the correct folding and assembly of outer membrane proteins. Recognizes specific patterns of aromatic residues and the orientation of their side chains, which are found more frequently in integral outer membrane proteins. May act in both early periplasmic and late outer membrane-associated steps of protein maturation. This is Chaperone SurA from Polaromonas sp. (strain JS666 / ATCC BAA-500).